The primary structure comprises 300 residues: MVKQRTLNRVVKASGIGLHSGQKVMINFIPHTVDGGIVFRRIDLDPPVDIPANALLIQEAFMCSNLVTGDIKVGTIEHVMSAIAGLGIDNLIVEVSASEVPIMDGSAGPFIYLLMQGGLCEQDAPKKFIKILKPVEALIDDKKAIFSPHNGFQLNFTIDFDHPAFAKEYQSATIDFSTETFVYEVSEARTFGFMKDLDYLKANNLALGASLDNAIGVDDTGVVNEEGLRFADEFVRHKILDAVGDLYLLGHQIIAKFDGYKSGHALNNQLLRNVQSDPSNYEIVTFNDEKDCPIPYVSVT.

Zn(2+) contacts are provided by His78, His237, and Asp241. The active-site Proton donor is the His264.

The protein belongs to the LpxC family. Zn(2+) is required as a cofactor.

The catalysed reaction is a UDP-3-O-[(3R)-3-hydroxyacyl]-N-acetyl-alpha-D-glucosamine + H2O = a UDP-3-O-[(3R)-3-hydroxyacyl]-alpha-D-glucosamine + acetate. Its pathway is glycolipid biosynthesis; lipid IV(A) biosynthesis; lipid IV(A) from (3R)-3-hydroxytetradecanoyl-[acyl-carrier-protein] and UDP-N-acetyl-alpha-D-glucosamine: step 2/6. Its function is as follows. Catalyzes the hydrolysis of UDP-3-O-myristoyl-N-acetylglucosamine to form UDP-3-O-myristoylglucosamine and acetate, the committed step in lipid A biosynthesis. The chain is UDP-3-O-acyl-N-acetylglucosamine deacetylase from Acinetobacter baumannii (strain ATCC 17978 / DSM 105126 / CIP 53.77 / LMG 1025 / NCDC KC755 / 5377).